The sequence spans 287 residues: Bifunctional protein FolD 1 (287 aa).

NADP(+) is bound by residues 170-172 (GRS) and S195.

Belongs to the tetrahydrofolate dehydrogenase/cyclohydrolase family. Homodimer.

It carries out the reaction (6R)-5,10-methylene-5,6,7,8-tetrahydrofolate + NADP(+) = (6R)-5,10-methenyltetrahydrofolate + NADPH. It catalyses the reaction (6R)-5,10-methenyltetrahydrofolate + H2O = (6R)-10-formyltetrahydrofolate + H(+). Its pathway is one-carbon metabolism; tetrahydrofolate interconversion. Its function is as follows. Catalyzes the oxidation of 5,10-methylenetetrahydrofolate to 5,10-methenyltetrahydrofolate and then the hydrolysis of 5,10-methenyltetrahydrofolate to 10-formyltetrahydrofolate. The polypeptide is Bifunctional protein FolD 1 (Streptomyces avermitilis (strain ATCC 31267 / DSM 46492 / JCM 5070 / NBRC 14893 / NCIMB 12804 / NRRL 8165 / MA-4680)).